A 244-amino-acid chain; its full sequence is MRNILLTIEYDGTGYFGWQKQPNKKTIQGTIEEAIKKLTGEEVNLIGSGRTDRGVHALNQKANFKTSSKIPTDKFPLALNSVLPGDISIKDAVEAPLDFSARYSARQKTYKYLIYNKKSRPALLRNYAYYYPYQLDVDAMQRACEYFIGEYDFKSFCSADSEAKTTIRRVYNAYLTFENECIAIYITANGFLYNMARIIAGTILDVGAGKLKPMDIPLIIESKDRTKAGKTLPPWGLYLVDVVY.

Asp-52 functions as the Nucleophile in the catalytic mechanism. Position 110 (Tyr-110) interacts with substrate.

The protein belongs to the tRNA pseudouridine synthase TruA family. Homodimer.

It catalyses the reaction uridine(38/39/40) in tRNA = pseudouridine(38/39/40) in tRNA. In terms of biological role, formation of pseudouridine at positions 38, 39 and 40 in the anticodon stem and loop of transfer RNAs. In Caldicellulosiruptor bescii (strain ATCC BAA-1888 / DSM 6725 / KCTC 15123 / Z-1320) (Anaerocellum thermophilum), this protein is tRNA pseudouridine synthase A.